A 68-amino-acid chain; its full sequence is Pleurocidin-like peptide WF4 (68 aa).

The first 22 residues, 1 to 22 (MKFTATFLMMFIFVLMVEPGEC), serve as a signal peptide directing secretion. A propeptide spanning residues 48–68 (GEQQDLDKRAVDEDPNVIVFE) is cleaved from the precursor.

This sequence belongs to the pleurocidin family.

It localises to the secreted. Its function is as follows. Antimicrobial peptide. The polypeptide is Pleurocidin-like peptide WF4 (ple4) (Pseudopleuronectes americanus (Winter flounder)).